A 267-amino-acid chain; its full sequence is Ribosomal RNA small subunit methyltransferase A (267 aa).

6 residues coordinate S-adenosyl-L-methionine: N18, L20, G45, E66, D91, and N112.

The protein belongs to the class I-like SAM-binding methyltransferase superfamily. rRNA adenine N(6)-methyltransferase family. RsmA subfamily.

The protein resides in the cytoplasm. It carries out the reaction adenosine(1518)/adenosine(1519) in 16S rRNA + 4 S-adenosyl-L-methionine = N(6)-dimethyladenosine(1518)/N(6)-dimethyladenosine(1519) in 16S rRNA + 4 S-adenosyl-L-homocysteine + 4 H(+). Functionally, specifically dimethylates two adjacent adenosines (A1518 and A1519) in the loop of a conserved hairpin near the 3'-end of 16S rRNA in the 30S particle. May play a critical role in biogenesis of 30S subunits. The polypeptide is Ribosomal RNA small subunit methyltransferase A (Shewanella denitrificans (strain OS217 / ATCC BAA-1090 / DSM 15013)).